The chain runs to 887 residues: PAN2-PAN3 deadenylation complex subunit PAN3 (887 aa).

Residues 43–71 form a C3H1-type zinc finger; sequence GVKLKYCRYYAKDKTCFYGEECQFLHEDP. Disordered regions lie at residues 102-147, 284-307, and 325-392; these read AVAG…IPGM, QTPN…SNVS, and SPAT…SGQV. Positions 122 to 138 are enriched in gly residues; it reads PGTGAAAGGGGSSGGLD. The tract at residues 147-498 is necessary and sufficient for interaction with PABPC1 but not needed for interaction with PAN2; that stretch reads MDGGALTDTS…PPPNRIQKSS (352 aa). The PABPC-interacting motif-2 (PAM-2) signature appears at 284–299; that stretch reads QTPNPTASEFIPKGGS. Residues 298–307 show a composition bias toward polar residues; that stretch reads GSTSRLSNVS. Residues serine 354 and serine 361 each carry the phosphoserine modification. Positions 363–392 are enriched in polar residues; the sequence is TPNPASYMVPSSASTSVNNPVSQTPSSGQV. The tract at residues 463-750 is pseudokinase domain; it reads QIDQADMPAV…SVNDIMPMIG (288 aa). ATP-binding positions include arginine 521, 570 to 577, and 644 to 645; these read DFHAGGET and TK. The stretch at 751-789 forms a coiled coil; sequence ARFYTQLDAAQMRNDVIEEDLAKEVQNGRLFRLLAKLGT. The interval 790–887 is knob domain; sequence INERPEFQKD…ELIAAANGQL (98 aa).

Belongs to the protein kinase superfamily. PAN3 family. In terms of assembly, homodimer. Forms a heterotrimer with a catalytic subunit PAN2 to form the poly(A)-nuclease (PAN) deadenylation complex. Interacts (via PAM-2 motif) with poly(A)-binding protein PABPC1 (via PABC domain), conferring substrate specificity of the enzyme complex. Interacts with the GW182 family proteins TNRC6A, TNRC6B and TNRC6. Interacts with YTHDF3. As to quaternary structure, interacts with PAN2. Interacts (via N-terminus) with PABPC1 at lower efficiency than isoform 3. Interacts with PAN2. Interacts (via N-terminus) with PABPC1 at higher efficiency than isoform 1.

Its subcellular location is the cytoplasm. The protein resides in the P-body. It is found in the nucleus. In terms of biological role, regulatory subunit of the poly(A)-nuclease (PAN) deadenylation complex, one of two cytoplasmic mRNA deadenylases involved in general and miRNA-mediated mRNA turnover. PAN specifically shortens poly(A) tails of RNA and the activity is stimulated by poly(A)-binding protein (PABP). PAN deadenylation is followed by rapid degradation of the shortened mRNA tails by the CCR4-NOT complex. Deadenylated mRNAs are then degraded by two alternative mechanisms, namely exosome-mediated 3'-5' exonucleolytic degradation, or deadenylation-dependent mRNA decapping and subsequent 5'-3' exonucleolytic degradation by XRN1. PAN3 acts as a regulator for PAN activity, recruiting the catalytic subunit PAN2 to mRNA via its interaction with RNA and PABP, and to miRNA targets via its interaction with GW182 family proteins. Decreases PAN2-mediated deadenylation, possibly by preventing progression into the second CCR4-NOT mediated stage of biphasic deadenylation. Has a significant effect on mRNA stability, generally stabilizing a subset of the transcriptome. Stabilizes mRNAs degraded by the AU-rich element (ARE)-mediated mRNA decay pathway but promotes degradation of mRNAs by the microRNA-mediated pathway. Its activity influences mRNP remodeling, specifically reducing formation of a subset of P-bodies containing GW220, an isoform of TNRC6A. Functionally, enhances PAN2 deadenylase activity and has an extensive effect on mRNA stability, generally enhancing mRNA decay across the transcriptome by multiple pathways, including the AU-rich element (ARE)-mediated pathway, microRNA-mediated pathway and the nonsense-mediated pathway (NMD). Its activity is required for efficient P-body formation. May be involved in regulating mRNAs of genes involved in cell cycle progression and cell proliferation. The protein is PAN2-PAN3 deadenylation complex subunit PAN3 of Homo sapiens (Human).